A 680-amino-acid polypeptide reads, in one-letter code: Galactose oxidase (680 aa).

The first 24 residues, 1–24 (MKHLLTLALCFSSINAVAVTVPHK), serve as a signal peptide directing secretion. A propeptide spanning residues 25-41 (AVGTGIPEGSLQFLSLR) is cleaved from the precursor. Residues 42-189 (ASAPIGSAIS…SIAEINVFQA (148 aa)) form the F5/8 type C domain. An intrachain disulfide couples Cys59 to Cys68. 5 Kelch repeats span residues 223–268 (RVLM…HDMF), 279–321 (QIVV…TMSD), 323–372 (RVFT…LYRS), 436–490 (KILT…VLPD), and 492–544 (STFI…LLLP). A cross-link (3'-(S-cysteinyl)-tyrosine (Cys-Tyr)) is located at residues 269–313 (CPGISMDGNGQIVVTGGNDAKKTSLYDSSSDSWIPGPDMQVARGY). Tyr313 contributes to the Cu cation binding site. Tyr536 and His537 together coordinate Cu cation. Tyr536 serves as the catalytic Proton acceptor. Residues Cys556 and Cys559 are joined by a disulfide bond. His622 provides a ligand contact to Cu cation.

As to quaternary structure, monomer. Requires Cu(2+) as cofactor. Post-translationally, galactose oxidase contains a protein-derived free radical cofactor. In the active state, Tyr-313, which is cross-linked to Cys-269 via a thioether bond, is oxidized to a radical and acts with Cu(2+) as a two-electron acceptor in the oxidation reaction. The cross-link is believed to modulate the redox potential of the tyrosyl radical, which is further stabilized by a stacking interaction with Trp-331 in the active site. The post-translational formation of the cross-link is closely linked to the propeptide cleavage event, and both are copper-dependent, autocatalytic processes. The propeptide may act as an intramolecular chaperone, facilitating thioester bond formation and copper binding by positioning of active-site residues, including copper ligands.

The protein resides in the secreted. It catalyses the reaction D-galactose + O2 = D-galacto-hexodialdose + H2O2. Inhibited by diethyldithiocarbamate. Functionally, catalyzes the sterospecific oxidation of primary alcohols to the corresponding aldehydes. The biologically relevant substrate of the enzyme is not known as the enzyme exhibits broad substrate specificity from small alcohols through sugars to oligo- and polysaccharides. The protein is Galactose oxidase (GAOA) of Gibberella zeae (Wheat head blight fungus).